Here is a 352-residue protein sequence, read N- to C-terminus: Chymopapain (352 aa).

A signal peptide spans 1–18 (MATMSSISKIIFLATCLI). Residues 19-134 (IHMGLSSADF…EDFTYKHVTN (116 aa)) constitute a propeptide, activation peptide. Asn86 is a glycosylation site (N-linked (GlcNAc...) asparagine). Disulfide bonds link Cys156–Cys197, Cys190–Cys229, and Cys287–Cys338. Residue Cys159 is part of the active site. Residues His293 and Asn313 contribute to the active site.

It belongs to the peptidase C1 family.

The enzyme catalyses Specificity similar to that of papain.. Cysteine proteinase with a high level of diversity in substrate specificity. In Carica papaya (Papaya), this protein is Chymopapain.